The sequence spans 1108 residues: Probable arabinosyltransferase A (1108 aa).

Helical transmembrane passes span 12–34 (IPRS…VPLL), 204–223 (IVMV…LAVL), 258–280 (VGLA…HVVG), 334–356 (VWMR…HWVL), 368–387 (ANRV…WLPF), 397–414 (IALG…AIAL), 421–443 (AVAV…AVAA), 463–482 (GLLA…LVVV), 531–553 (FAVL…RGHV), 582–604 (WAVQ…AFAC), 616–638 (TLYV…GWFY), 653–675 (IASH…LAAW), and 696–718 (VLAS…ASLT). The interval 804–825 (PGLVNSDASPNKPNVAYSDSAG) is disordered.

This sequence belongs to the emb family.

It localises to the cell membrane. In terms of biological role, arabinosyl transferase responsible for the polymerization of arabinose into the arabinan of arabinogalactan. In Mycobacterium avium, this protein is Probable arabinosyltransferase A (embA).